A 168-amino-acid chain; its full sequence is Cyclin-dependent kinase 4 inhibitor C (168 aa).

ANK repeat units follow at residues 4 to 33 (PWGN…NVNA), 37 to 65 (FGRT…NPNL), 69 to 98 (TGFA…DVNI), 102 to 132 (EGNL…NVGH), and 136 to 165 (KGDT…GGAT).

It belongs to the CDKN2 cyclin-dependent kinase inhibitor family. As to quaternary structure, heterodimer of p18 with CDK6.

In terms of biological role, interacts strongly with CDK6, weakly with CDK4. Inhibits cell growth and proliferation with a correlated dependence on endogenous retinoblastoma protein RB. The sequence is that of Cyclin-dependent kinase 4 inhibitor C (Cdkn2c) from Mus musculus (Mouse).